Consider the following 387-residue polypeptide: Leucine aminopeptidase 1 (387 aa).

Residues Met1–Ala18 form the signal peptide. Residues Arg19 to Lys86 constitute a propeptide that is removed on maturation. A glycan (N-linked (GlcNAc...) asparagine) is linked at Asn179. 4 residues coordinate Zn(2+): His187, Asp206, Glu245, and Asp272. A disulfide bond links Cys321 and Cys325. His354 serves as a coordination point for Zn(2+).

Belongs to the peptidase M28 family. M28E subfamily. In terms of assembly, monomer. Zn(2+) is required as a cofactor.

The protein localises to the secreted. Functionally, extracellular aminopeptidase that allows assimilation of proteinaceous substrates. The chain is Leucine aminopeptidase 1 (lap1) from Sclerotinia sclerotiorum (strain ATCC 18683 / 1980 / Ss-1) (White mold).